Reading from the N-terminus, the 161-residue chain is Urease accessory protein UreE (161 aa).

This sequence belongs to the UreE family.

The protein localises to the cytoplasm. Its function is as follows. Involved in urease metallocenter assembly. Binds nickel. Probably functions as a nickel donor during metallocenter assembly. The protein is Urease accessory protein UreE of Arthrobacter sp. (strain FB24).